Reading from the N-terminus, the 578-residue chain is Putative ankyrin repeat protein FPV022 (578 aa).

11 ANK repeats span residues 4 to 34 (RRKS…DLNK), 38 to 67 (KNRT…KMSA), 68 to 97 (CKVP…SVDV), 100 to 129 (KGET…SGPY), 160 to 189 (YGHT…ITDN), 222 to 251 (EGTT…DPKV), 255 to 287 (HSVS…MVNM), 320 to 349 (YLSE…NINK), 353 to 382 (YGNI…DVNA), 386 to 415 (DGNT…DINS), and 419 to 449 (NGRT…KKNK).

The polypeptide is Putative ankyrin repeat protein FPV022 (Fowlpox virus (strain NVSL) (FPV)).